A 2327-amino-acid chain; its full sequence is Pre-mRNA-processing-splicing factor 8 homolog (2327 aa).

Positions 1–14 (MDDTNSNINQSNES) are enriched in polar residues. Residues 1 to 20 (MDDTNSNINQSNESQHLEEK) are disordered. Residues 801–1292 (TTVHWLEKRR…KIQTRVKIGL (492 aa)) are reverse transcriptase homology domain. A linker region spans residues 1293 to 1566 (NSKMPNRFPP…TLKISLIQIF (274 aa)). The important for branch point selection stretch occupies residues 1502-1515 (MKYKKLTHAQRSGL). The interval 1570-1740 (LWQKIHESLV…LRERIRKGLQ (171 aa)) is restriction endonuclease homology domain. Positions 1657 to 2023 (GDFDSHDIER…QIAEIEKQKT (367 aa)) are involved in interaction with pre-mRNA 5' splice site. Residues 1755-2008 (NFGELFSNKI…ILGMEISAPS (254 aa)) are RNase H homology domain. In terms of domain architecture, MPN spans 2093-2223 (TYVFPKNILK…LTAYHLTPSG (131 aa)).

As to quaternary structure, part of the U5 snRNP complex and of the U4/U6-U5 tri-snRNP complex.

The protein resides in the nucleus speckle. Its function is as follows. Functions as a scaffold that mediates the ordered assembly of spliceosomal proteins and snRNAs. Required for the assembly of the U4/U6-U5 tri-snRNP complex. Functions as a scaffold that positions spliceosomal U2, U5 and U6 snRNAs at splice sites on pre-mRNA substrates, so that splicing can occur. Interacts with both the 5' and the 3' splice site. This chain is Pre-mRNA-processing-splicing factor 8 homolog (prpf8), found in Dictyostelium discoideum (Social amoeba).